The primary structure comprises 264 residues: 3-methyl-2-oxobutanoate hydroxymethyltransferase (264 aa).

Mg(2+)-binding residues include Asp45 and Asp84. 3-methyl-2-oxobutanoate-binding positions include 45–46 (DS), Asp84, and Lys112. Glu114 is a binding site for Mg(2+). Residue Glu181 is the Proton acceptor of the active site.

This sequence belongs to the PanB family. In terms of assembly, homodecamer; pentamer of dimers. Mg(2+) serves as cofactor.

It localises to the cytoplasm. It catalyses the reaction 3-methyl-2-oxobutanoate + (6R)-5,10-methylene-5,6,7,8-tetrahydrofolate + H2O = 2-dehydropantoate + (6S)-5,6,7,8-tetrahydrofolate. Its pathway is cofactor biosynthesis; (R)-pantothenate biosynthesis; (R)-pantoate from 3-methyl-2-oxobutanoate: step 1/2. Functionally, catalyzes the reversible reaction in which hydroxymethyl group from 5,10-methylenetetrahydrofolate is transferred onto alpha-ketoisovalerate to form ketopantoate. The polypeptide is 3-methyl-2-oxobutanoate hydroxymethyltransferase (Shewanella sp. (strain MR-4)).